The sequence spans 319 residues: MISRSIFSKSVSLQRSQNRSFLLTAASAVFGSMIFNENNQLASKMERGELHYDDPNASLNEKKVSPASNKYFSRRESEYPGHVPLYGIEKFMMFIGSGLGSFFHPENNANIVALGESTAIEPVLRKLQRQMLSDPVGRQILREKPRMTSTSLNLDHLRALPKNTLGHTYVSWLDREGVSPDTRVPVRFIDNEELAYIYQRYRECHDFYHAITGLPIIIEGEIAVKVLEFMNMGILMPGLGALLAPLRLKPSQRERLYSIYYPWAFRSGLNAKPLINVYWEKSLEMDVNELRRSLGIEQPPDLRNLRKEYFAKLKKEKRI.

The transit peptide at 1 to 28 directs the protein to the mitochondrion; it reads MISRSIFSKSVSLQRSQNRSFLLTAASA. His205, Asp206, His209, and Glu221 together coordinate Zn(2+).

The protein belongs to the COQ4 family. In terms of assembly, component of a multi-subunit COQ enzyme complex, composed of at least COQ3, COQ4, COQ5, COQ6, COQ7 and COQ9. The cofactor is Zn(2+).

Its subcellular location is the mitochondrion inner membrane. The catalysed reaction is a 4-hydroxy-3-methoxy-5-(all-trans-polyprenyl)benzoate + H(+) = a 2-methoxy-6-(all-trans-polyprenyl)phenol + CO2. It functions in the pathway cofactor biosynthesis; ubiquinone biosynthesis. Lyase that catalyzes the C1-decarboxylation of 4-hydroxy-3-methoxy-5-(all-trans-polyprenyl)benzoic acid into 2-methoxy-6-(all-trans-polyprenyl)phenol during ubiquinone biosynthesis. This is Ubiquinone biosynthesis protein COQ4, mitochondrial from Clavispora lusitaniae (strain ATCC 42720) (Yeast).